The sequence spans 218 residues: MTNTEIFNKLTNAIVTQDIAGCAKLTQEALDAGISPLDIITKGLSPGMKIIGDKFEAAEIFLPQIMMSGKAMSSAMEILTPELEKTKVEGEEGTGLAITFVAEGDIHDIGHRLVTTMLGANGFDILDLGVDVLNETVIEEAAKRKGQKIILVGSALMTTSMLGQKDLMDRLREENLRDSVKCMFGGAPVSDKWIDEIGADATAENAAEAAKVALNVMK.

The 91-residue stretch at Met1 to Glu91 folds into the B12-binding N-terminal domain. In terms of domain architecture, B12-binding spans Thr94–Lys218. Residue His107 participates in methylcob(III)alamin binding.

Belongs to the methylamine corrinoid protein family. In terms of assembly, can form a complex with MtmB.

It participates in one-carbon metabolism; methanogenesis from methylamine. Acts as a methyl group carrier between MtmB and MtbA. In Methanosarcina mazei (strain ATCC BAA-159 / DSM 3647 / Goe1 / Go1 / JCM 11833 / OCM 88) (Methanosarcina frisia), this protein is Monomethylamine corrinoid protein 2 (mtmC2).